Here is a 191-residue protein sequence, read N- to C-terminus: FMN-dependent NADH:quinone oxidoreductase 1 (191 aa).

Residues serine 10 and 16-18 (SVS) contribute to the FMN site.

The protein belongs to the azoreductase type 1 family. As to quaternary structure, homodimer. It depends on FMN as a cofactor.

It carries out the reaction 2 a quinone + NADH + H(+) = 2 a 1,4-benzosemiquinone + NAD(+). The enzyme catalyses N,N-dimethyl-1,4-phenylenediamine + anthranilate + 2 NAD(+) = 2-(4-dimethylaminophenyl)diazenylbenzoate + 2 NADH + 2 H(+). Quinone reductase that provides resistance to thiol-specific stress caused by electrophilic quinones. Its function is as follows. Also exhibits azoreductase activity. Catalyzes the reductive cleavage of the azo bond in aromatic azo compounds to the corresponding amines. In Jannaschia sp. (strain CCS1), this protein is FMN-dependent NADH:quinone oxidoreductase 1.